A 192-amino-acid polypeptide reads, in one-letter code: Interleukin-18 (192 aa).

A propeptide spanning residues 1–35 is cleaved from the precursor; sequence MAAEPVEDNCISFVEMKFINNTLYFVAENGDLESD.

It belongs to the IL-1 family. In terms of assembly, forms a ternary complex with ligand-binding receptor subunit IL18R1 and signaling receptor subunit IL18RAP at the plasma membrane. Mature IL18 first binds to IL18R1 forming a low affinity binary complex, which then interacts with IL18RAP to form a high affinity ternary complex that signals inside the cell. Interacts with cargo receptor TMED10; the interaction mediates the translocation from the cytoplasm into the ERGIC (endoplasmic reticulum-Golgi intermediate compartment) and thereby secretion. Post-translationally, the pro-IL-18 precursor is processed by CASP1, CASP4 or CASP5 to yield its mature, active form. The pro-IL-18 precursor features autoinhibitory interactions between the propeptide and the post-cleavage-site region, preventing recognition by the IL18R1 receptor. Processing by CASP1, CASP4 or CASP5 induces conformational changes to generate critical receptor-binding sites. The mature form is then secreted and released in the extracellular milieu by passing through the gasdermin-D (GSDMD) pore. In contrast, cleavage by CASP3 inactivates IL18.

The protein localises to the cytoplasm. It is found in the cytosol. It localises to the secreted. In terms of biological role, pro-inflammatory cytokine primarily involved in epithelial barrier repair, polarized T-helper 1 (Th1) cell and natural killer (NK) cell immune responses. Upon binding to IL18R1 and IL18RAP, forms a signaling ternary complex which activates NF-kappa-B, triggering synthesis of inflammatory mediators. Synergizes with IL12/interleukin-12 to induce IFNG synthesis from T-helper 1 (Th1) cells and natural killer (NK) cells. Involved in transduction of inflammation downstream of pyroptosis: its mature form is specifically released in the extracellular milieu by passing through the gasdermin-D (GSDMD) pore. This chain is Interleukin-18 (IL18), found in Capra hircus (Goat).